Here is a 187-residue protein sequence, read N- to C-terminus: Elongation factor P (187 aa).

The protein belongs to the elongation factor P family.

It is found in the cytoplasm. Its pathway is protein biosynthesis; polypeptide chain elongation. Functionally, involved in peptide bond synthesis. Stimulates efficient translation and peptide-bond synthesis on native or reconstituted 70S ribosomes in vitro. Probably functions indirectly by altering the affinity of the ribosome for aminoacyl-tRNA, thus increasing their reactivity as acceptors for peptidyl transferase. The protein is Elongation factor P of Mycobacterium ulcerans (strain Agy99).